A 257-amino-acid polypeptide reads, in one-letter code: tRNA (guanine-N(1)-)-methyltransferase (257 aa).

S-adenosyl-L-methionine contacts are provided by residues Gly112 and 136–141; that span reads LGDYVL.

This sequence belongs to the RNA methyltransferase TrmD family. As to quaternary structure, homodimer.

It localises to the cytoplasm. It catalyses the reaction guanosine(37) in tRNA + S-adenosyl-L-methionine = N(1)-methylguanosine(37) in tRNA + S-adenosyl-L-homocysteine + H(+). In terms of biological role, specifically methylates guanosine-37 in various tRNAs. This chain is tRNA (guanine-N(1)-)-methyltransferase, found in Salinispora tropica (strain ATCC BAA-916 / DSM 44818 / JCM 13857 / NBRC 105044 / CNB-440).